The following is a 554-amino-acid chain: Glucose-binding protein GlcS (554 aa).

Residues Met1–Gln17 lie on the Cytoplasmic side of the membrane. A helical transmembrane segment spans residues Ile18 to Val38. Over Leu39 to Thr525 the chain is Extracellular. The helical transmembrane segment at Ser526–Ile546 threads the bilayer. At Asp547–Lys554 the chain is on the cytoplasmic side.

Belongs to the bacterial solute-binding protein 1 family. The complex is composed of two ATP-binding proteins (GlcV), two transmembrane proteins (GlcT and GlcU) and a solute-binding protein (GlcS).

Its subcellular location is the cell membrane. With respect to regulation, binding of glucose is strongly inhibited by galactose and mannose. Its function is as follows. Part of the ABC transporter complex GlcSTUV involved in glucose uptake. Binds glucose. Can also bind galactose and mannose. The protein is Glucose-binding protein GlcS of Saccharolobus solfataricus (strain ATCC 35092 / DSM 1617 / JCM 11322 / P2) (Sulfolobus solfataricus).